The chain runs to 1215 residues: Kinesin-like protein KIN-7I (1215 aa).

Residues 3–327 (RIHVAVRARP…LQFASRALRV (325 aa)) form the Kinesin motor domain. Residue 79 to 86 (GQTNSGKT) coordinates ATP. 4 coiled-coil regions span residues 333 to 414 (VNEI…IENL), 571 to 646 (ESEA…AAYE), 708 to 855 (IRDY…KRDS), and 894 to 979 (DMEA…KEDM).

The protein belongs to the TRAFAC class myosin-kinesin ATPase superfamily. Kinesin family. KIN-7 subfamily.

This chain is Kinesin-like protein KIN-7I, found in Oryza sativa subsp. japonica (Rice).